The sequence spans 122 residues: Large ribosomal subunit protein uL14 (122 aa).

This sequence belongs to the universal ribosomal protein uL14 family. Part of the 50S ribosomal subunit. Forms a cluster with proteins L3 and L19. In the 70S ribosome, L14 and L19 interact and together make contacts with the 16S rRNA in bridges B5 and B8.

Its function is as follows. Binds to 23S rRNA. Forms part of two intersubunit bridges in the 70S ribosome. This Aeromonas salmonicida (strain A449) protein is Large ribosomal subunit protein uL14.